The sequence spans 395 residues: Pyruvate synthase subunit PorA (395 aa).

As to quaternary structure, heterotetramer of one alpha, one beta, one delta and one gamma chain.

The enzyme catalyses 2 oxidized [2Fe-2S]-[ferredoxin] + pyruvate + CoA = 2 reduced [2Fe-2S]-[ferredoxin] + acetyl-CoA + CO2 + H(+). This chain is Pyruvate synthase subunit PorA (porA), found in Pyrococcus abyssi (strain GE5 / Orsay).